The sequence spans 544 residues: CTP synthase (544 aa).

An amidoligase domain region spans residues 1–266 (MTKFIFVTGG…DDLICERFGL (266 aa)). Ser-13 contributes to the CTP binding site. Ser-13 is a binding site for UTP. ATP-binding positions include 14–19 (SLGKGI) and Asp-71. Mg(2+) contacts are provided by Asp-71 and Glu-140. Residues 147–149 (DIE), 187–192 (KTKPTQ), and Lys-223 contribute to the CTP site. Residues 187–192 (KTKPTQ) and Lys-223 contribute to the UTP site. The Glutamine amidotransferase type-1 domain occupies 291–543 (TVAMVGKYVE…VKAAKNYSEA (253 aa)). Gly-354 serves as a coordination point for L-glutamine. Cys-381 serves as the catalytic Nucleophile; for glutamine hydrolysis. L-glutamine contacts are provided by residues 382–385 (LGMQ), Glu-404, and Arg-471. Residues His-516 and Glu-518 contribute to the active site.

It belongs to the CTP synthase family. In terms of assembly, homotetramer.

The enzyme catalyses UTP + L-glutamine + ATP + H2O = CTP + L-glutamate + ADP + phosphate + 2 H(+). It catalyses the reaction L-glutamine + H2O = L-glutamate + NH4(+). It carries out the reaction UTP + NH4(+) + ATP = CTP + ADP + phosphate + 2 H(+). It functions in the pathway pyrimidine metabolism; CTP biosynthesis via de novo pathway; CTP from UDP: step 2/2. Allosterically activated by GTP, when glutamine is the substrate; GTP has no effect on the reaction when ammonia is the substrate. The allosteric effector GTP functions by stabilizing the protein conformation that binds the tetrahedral intermediate(s) formed during glutamine hydrolysis. Inhibited by the product CTP, via allosteric rather than competitive inhibition. Its function is as follows. Catalyzes the ATP-dependent amination of UTP to CTP with either L-glutamine or ammonia as the source of nitrogen. Regulates intracellular CTP levels through interactions with the four ribonucleotide triphosphates. This chain is CTP synthase, found in Psychrobacter cryohalolentis (strain ATCC BAA-1226 / DSM 17306 / VKM B-2378 / K5).